A 765-amino-acid polypeptide reads, in one-letter code: Complement factor B (765 aa).

The N-terminal stretch at 1 to 25 (MGSNRCPRLGLVPLILGLLSGGVSM) is a signal peptide. Sushi domains follow at residues 35-100 (SPCS…ECKA), 101-160 (IRCP…ICDD), and 163-220 (GYCP…SCQD). 6 disulfide bridges follow: C37–C76, C62–C98, C103–C145, C131–C158, C165–C205, and C191–C218. 2 N-linked (GlcNAc...) asparagine glycosylation sites follow: N122 and N142. Residues 270 to 469 (NIYLVLDGSD…NLEDVFFQML (200 aa)) form the VWFA domain. Residues S278 and S280 each coordinate Mg(2+). N-linked (GlcNAc...) asparagine glycosylation occurs at N285. Mg(2+) is bound at residue T353. N378 carries an N-linked (GlcNAc...) asparagine glycan. A Peptidase S1 domain is found at 477-758 (LCGMVWEHKD…VLPWLKEKLK (282 aa)). 5 cysteine pairs are disulfide-bonded: C478/C596, C511/C527, C599/C615, C660/C686, and C699/C729. Active-site charge relay system residues include H526 and D576. Residue S703 is the Charge relay system of the active site.

The protein belongs to the peptidase S1 family. Monomer. Interacts with complement C3b; this interaction is dependent on the presence of Mg(2+). In terms of assembly, catalytic component of the C3 convertase of the alternative complement pathway, also named C3bBb, composed of complement factor B Bb and complement C3b. Catalytic component of the C5 convertase of the alternative complement pathway, also named C3bBb3b, composed of complement factor B Bb and additional molecules of complement C3b. Interacts to CFP; this interaction contributes to the stabilization of the active C3-convertase enzyme complex. Requires Mg(2+) as cofactor. Mn(2+) is required as a cofactor. Cleaved by CFD following activation of the alternative complement system, generating Ba and Bb chains. Cleavage and activation takes place when CFB is already associated with complement C3b.

It localises to the secreted. Its subcellular location is the cell surface. It carries out the reaction Cleavage of Arg-|-Ser bond in complement component C3 alpha-chain to yield C3a and C3b, and Arg-|-Xaa bond in complement component C5 alpha-chain to yield C5a and C5b.. In terms of biological role, precursor of the catalytic component of the C3 and C5 convertase complexes of the alternative pathway of the complement system, a cascade of proteins that leads to phagocytosis and breakdown of pathogens and signaling that strengthens the adaptive immune system. The alternative complement pathway acts as an amplification loop that enhances other complement pathways (classical, lectin and GZMK) by promoting formation of additional C3 and C5 convertases. CFB is cleaved and activated by CFD to generate Ba and Bb chains; Bb chain constituting the catalytic component of the C3 and C5 convertases. Functionally, serine protease component of the complement C3 and C5 convertase complexes of the alternative complement pathway. Following cleavage and activation by factor D (CFD), forms the C3 convertase together with complement C3b. As part of the C3 convertase, cleaves and activates C3 into C3a anaphylatoxin and C3b opsonin, the next components of the complement pathways. When an additional complement C3b molecule binds to the C3 convertase, forms the C5 convertase, which cleaves and activates C5 into C5a anaphylatoxin and C5b component of the membrane attack complex. Involved in proliferation and differentiation of preactivated B-lymphocytes, rapid spreading of peripheral blood monocytes, stimulation of lymphocyte blastogenesis and lysis of erythrocytes. This Sus scrofa (Pig) protein is Complement factor B (CFB).